A 329-amino-acid chain; its full sequence is Ferredoxin--NADP reductase 2 (329 aa).

FAD contacts are provided by threonine 18, glutamate 37, glutamine 45, tyrosine 50, valine 90, phenylalanine 124, aspartate 285, and serine 326.

The protein belongs to the ferredoxin--NADP reductase type 2 family. Homodimer. The cofactor is FAD.

It carries out the reaction 2 reduced [2Fe-2S]-[ferredoxin] + NADP(+) + H(+) = 2 oxidized [2Fe-2S]-[ferredoxin] + NADPH. The polypeptide is Ferredoxin--NADP reductase 2 (Bacillus mycoides (strain KBAB4) (Bacillus weihenstephanensis)).